The chain runs to 361 residues: Caspase activity and apoptosis inhibitor 1 (361 aa).

The segment covering 1 to 14 (MTGKKSSREKRRKR) has biased composition (basic residues). Disordered stretches follow at residues 1–28 (MTGK…APDI) and 67–100 (GGSG…GSLQ). The span at 19-28 (AAAALAAPDI) shows a compositional bias: low complexity. A Phosphoserine modification is found at Ser-89. Residue Thr-90 is modified to Phosphothreonine. Lys-104 participates in a covalent cross-link: Glycyl lysine isopeptide (Lys-Gly) (interchain with G-Cter in SUMO2). Residues Ser-120 and Ser-203 each carry the phosphoserine modification. Disordered regions lie at residues 198 to 218 (DNGM…MGSD) and 230 to 331 (ASSV…DVQP). Residues 199–210 (NGMDSDMEEEAD) are compositionally biased toward acidic residues. Residues 234–251 (RENKQPEGLELKQGKGED) show a composition bias toward basic and acidic residues. Residues 272-281 (EEAAAPEAPE) show a composition bias toward low complexity. A coiled-coil region spans residues 281–311 (ENTVQSEAGQIDDLEKDIEKSVNEILGLAES). A Phosphoserine modification is found at Ser-312.

Ubiquitous.

Its function is as follows. Anti-apoptotic protein that modulates a caspase-10 dependent mitochondrial caspase-3/9 feedback amplification loop. The sequence is that of Caspase activity and apoptosis inhibitor 1 (CAAP1) from Homo sapiens (Human).